The chain runs to 104 residues: MIRKAFVMQVNADAHEEYQRRHNPIWPELESVLKAHGAHHYAIYLDKERNLLFATVEIESEERWNAIASTDVCQRWWKHMRDVMPANPDNSPVSAELKEVFYLA.

Tyrosine 18 serves as a coordination point for substrate. Catalysis depends on histidine 22, which acts as the Proton donor. Residues tyrosine 41 and 76-77 (WW) each bind substrate.

This sequence belongs to the rhamnose mutarotase family. In terms of assembly, homodimer.

It is found in the cytoplasm. It catalyses the reaction alpha-L-rhamnose = beta-L-rhamnose. It functions in the pathway carbohydrate metabolism; L-rhamnose metabolism. Functionally, involved in the anomeric conversion of L-rhamnose. The chain is L-rhamnose mutarotase from Citrobacter koseri (strain ATCC BAA-895 / CDC 4225-83 / SGSC4696).